We begin with the raw amino-acid sequence, 119 residues long: Large ribosomal subunit protein uL22 (119 aa).

Belongs to the universal ribosomal protein uL22 family. In terms of assembly, part of the 50S ribosomal subunit.

Its function is as follows. This protein binds specifically to 23S rRNA; its binding is stimulated by other ribosomal proteins, e.g. L4, L17, and L20. It is important during the early stages of 50S assembly. It makes multiple contacts with different domains of the 23S rRNA in the assembled 50S subunit and ribosome. The globular domain of the protein is located near the polypeptide exit tunnel on the outside of the subunit, while an extended beta-hairpin is found that lines the wall of the exit tunnel in the center of the 70S ribosome. This is Large ribosomal subunit protein uL22 from Rickettsia prowazekii (strain Madrid E).